Consider the following 251-residue polypeptide: Probable phosphatase Sama_2233 (251 aa).

The Zn(2+) site is built by His8, His10, His16, His41, Glu74, His102, His132, Asp193, and His195.

Belongs to the PHP family. Requires Zn(2+) as cofactor.

The protein is Probable phosphatase Sama_2233 of Shewanella amazonensis (strain ATCC BAA-1098 / SB2B).